A 161-amino-acid polypeptide reads, in one-letter code: Phosphopantetheine adenylyltransferase (161 aa).

Residue S10 participates in substrate binding. Residues 10-11 (SF) and H18 each bind ATP. Residues K42, A75, and R89 each coordinate substrate. Residues 90–92 (GLR), E100, and 125–131 (LSPISSS) contribute to the ATP site.

This sequence belongs to the bacterial CoaD family. In terms of assembly, homohexamer. The cofactor is Mg(2+).

It is found in the cytoplasm. The catalysed reaction is (R)-4'-phosphopantetheine + ATP + H(+) = 3'-dephospho-CoA + diphosphate. It participates in cofactor biosynthesis; coenzyme A biosynthesis; CoA from (R)-pantothenate: step 4/5. Its function is as follows. Reversibly transfers an adenylyl group from ATP to 4'-phosphopantetheine, yielding dephospho-CoA (dPCoA) and pyrophosphate. The protein is Phosphopantetheine adenylyltransferase of Streptococcus agalactiae serotype III (strain NEM316).